The sequence spans 56 residues: Large ribosomal subunit protein bL33 (56 aa).

The protein belongs to the bacterial ribosomal protein bL33 family.

This Rickettsia bellii (strain OSU 85-389) protein is Large ribosomal subunit protein bL33.